A 436-amino-acid polypeptide reads, in one-letter code: Two-pore potassium channel 3 (436 aa).

Over 1–148 (MANEGSDPLL…QKDPTETSRS (148 aa)) the chain is Cytoplasmic. The disordered stretch occupies residues 62-117 (SHFIDSMKQPSPSSSSTAVNNPFSDSSTLDPLLPPPPPQPEPWLSDQTSSHCQGHA). The span at 71-92 (PSPSSSSTAVNNPFSDSSTLDP) shows a compositional bias: low complexity. A compositionally biased stretch (pro residues) spans 93–102 (LLPPPPPQPE). Residues 149–169 (VVRQAFALLVVYLSLGVLIYW) form a helical membrane-spanning segment. An intramembrane region (pore-forming) is located at residues 185-204 (DGLYFCIVTMCTIGYGDITP). The helical transmembrane segment at 212 to 232 (FSIMFVLVGFGFIDILLSGMV) threads the bilayer. The Cytoplasmic segment spans residues 233–274 (SYVLDLQESYMLDSAKRRDEPEKRRSYIIDVKKGRMRIRLKV). A helical transmembrane segment spans residues 275–295 (ALALGVVVLCIAVGVGIMHFI). Residues 302–321 (DSFYLSVMSVTTVGYGDRAF) constitute an intramembrane region (pore-forming). Residues 328–348 (LFAAIWLLVSTLAVARAFLYL) form a helical membrane-spanning segment. Over 349 to 436 (AEARVDKRNR…LDLLEGGSGD (88 aa)) the chain is Cytoplasmic. 2 EF-hand domains span residues 365–400 (LCET…EMEK) and 404–436 (KDIL…GSGD). 9 residues coordinate Ca(2+): Asp-378, Asp-380, Asn-382, Cys-384, Glu-389, Asp-417, Asn-421, Lys-423, and Asp-428.

The protein belongs to the two pore domain potassium channel (TC 1.A.1.7) family. Homodimer. Expressed in roots, cotyledons, stems, hypocotyls, leaves and flowers. Detected in root tips and in mesophyll cells and guard cells of the leaves.

The protein resides in the vacuole membrane. Its subcellular location is the plastid. It localises to the chloroplast thylakoid membrane. Its activity is regulated as follows. Inhibited by barium, but not by tetraethylammonium. In terms of biological role, two-pore potassium channel modulating the proton motive force (pmf) necessary to convert photochemical energy into physiological functions. Mediates the potassium efflux from the thylakoid lumen required for the regulation of the transmembrane electrical potential, the enhancement of the pH gradient for ATP synthesis, the regulation of electron flow, and pH-mediated photoprotective responses. Requires calcium for channel activity. The sequence is that of Two-pore potassium channel 3 from Arabidopsis thaliana (Mouse-ear cress).